Reading from the N-terminus, the 145-residue chain is Maximins 5/H4 type 2 (145 aa).

Positions 1 to 18 are cleaved as a signal peptide; sequence MNFKYIVAVSFLIASAYA. 2 consecutive propeptides follow at residues 19 to 43 and 74 to 124; these read RSVQNDEQSLSQRDVLEEESLREIR and TAEE…KEKR. Leu-144 is modified (leucine amide).

Belongs to the bombinin family. As to expression, expressed by the skin glands.

It is found in the secreted. Maximin-5 shows antibacterial activity against both Gram-positive and Gram-negative bacteria. The only exception is the resistance of E.coli. Also shows antimicrobial activity against fungi C.albicans, A.flavus and P.uticale. It has little hemolytic activity. It does not possess a significant cytotoxicity against tumor cell lines. It does not possess a significant anti-HIV activity. Functionally, maximin-H4 shows antibacterial activity against both Gram-positive and Gram-negative bacteria. It also shows antimicrobial activity against the fungus C.albicans. Shows strong hemolytic activity. The sequence is that of Maximins 5/H4 type 2 from Bombina maxima (Giant fire-bellied toad).